The primary structure comprises 833 residues: Leucine--tRNA ligase (833 aa).

The 'HIGH' region signature appears at 41–52 (PYPSGAGLHVGH). A 'KMSKS' region motif is present at residues 610 to 614 (KMSKS). K613 contacts ATP.

The protein belongs to the class-I aminoacyl-tRNA synthetase family.

Its subcellular location is the cytoplasm. It catalyses the reaction tRNA(Leu) + L-leucine + ATP = L-leucyl-tRNA(Leu) + AMP + diphosphate. The polypeptide is Leucine--tRNA ligase (Streptococcus pneumoniae serotype 19F (strain G54)).